A 258-amino-acid polypeptide reads, in one-letter code: Thiamine thiazole synthase (258 aa).

Residues Ser36, 55-56 (ER), Gly63, Ile127, and 153-155 (HVD) each bind NAD(+). Asp155 and His170 together coordinate Fe cation. Met224 serves as a coordination point for NAD(+). Arg234 lines the glycine pocket.

The protein belongs to the THI4 family. As to quaternary structure, homooctamer; tetramer of dimers. Requires Fe(2+) as cofactor.

The enzyme catalyses hydrogen sulfide + glycine + NAD(+) = ADP-5-ethyl-4-methylthiazole-2-carboxylate + nicotinamide + 3 H2O + H(+). It participates in cofactor biosynthesis; thiamine diphosphate biosynthesis. Functionally, involved in the biosynthesis of the thiazole moiety of thiamine. Catalyzes the conversion of NAD and glycine to adenosine diphosphate 5-(2-hydroxyethyl)-4-methylthiazole-2-carboxylate (ADT), an adenylated thiazole intermediate, using free sulfide as a source of sulfur. The polypeptide is Thiamine thiazole synthase (Methanothermobacter thermautotrophicus (strain ATCC 29096 / DSM 1053 / JCM 10044 / NBRC 100330 / Delta H) (Methanobacterium thermoautotrophicum)).